The chain runs to 286 residues: Acetyl-coenzyme A carboxylase carboxyl transferase subunit beta (286 aa).

The CoA carboxyltransferase N-terminal domain occupies 26 to 286; that stretch reads LWEKCVKCDA…LAKFTRRAAV (261 aa). Zn(2+) contacts are provided by C30, C33, C49, and C52. The segment at 30–52 adopts a C4-type zinc-finger fold; sequence CVKCDAVLYKPELEKNLDVCPKC.

This sequence belongs to the AccD/PCCB family. Acetyl-CoA carboxylase is a heterohexamer composed of biotin carboxyl carrier protein (AccB), biotin carboxylase (AccC) and two subunits each of ACCase subunit alpha (AccA) and ACCase subunit beta (AccD). Requires Zn(2+) as cofactor.

The protein localises to the cytoplasm. The catalysed reaction is N(6)-carboxybiotinyl-L-lysyl-[protein] + acetyl-CoA = N(6)-biotinyl-L-lysyl-[protein] + malonyl-CoA. Its pathway is lipid metabolism; malonyl-CoA biosynthesis; malonyl-CoA from acetyl-CoA: step 1/1. In terms of biological role, component of the acetyl coenzyme A carboxylase (ACC) complex. Biotin carboxylase (BC) catalyzes the carboxylation of biotin on its carrier protein (BCCP) and then the CO(2) group is transferred by the transcarboxylase to acetyl-CoA to form malonyl-CoA. In Cellvibrio japonicus (strain Ueda107) (Pseudomonas fluorescens subsp. cellulosa), this protein is Acetyl-coenzyme A carboxylase carboxyl transferase subunit beta.